The primary structure comprises 289 residues: MRKFAAFACGTGAGFAAYYFQKLRDPLQVVHNSWTNSERHISECALWDSNWDYRDPKSLARPMKNDKPQEQNRYNADLEKNVSKYARHIILIRHGEYLDVGETDETHHLTDRGRLQAKYTGKRLHELGIKWDKVIASNMVRAQETAEIILNEIDFDKTKVKSCSYLREGAPIPPQPPVGHWKPEASQFFRDGARIEAAFRRYFHRALPDQEKDSYTLIVGHGNVIRYFVCRALQFPAEGWLRININHASITWLTISPSGNVSIKYLGDTGFIPAKHLTNRIPREAKNVV.

This sequence belongs to the phosphoglycerate mutase family. BPG-dependent PGAM subfamily. As to quaternary structure, interacts with Pk92B/ASK1.

It is found in the mitochondrion outer membrane. It carries out the reaction O-phospho-L-seryl-[protein] + H2O = L-seryl-[protein] + phosphate. The catalysed reaction is O-phospho-L-threonyl-[protein] + H2O = L-threonyl-[protein] + phosphate. Its function is as follows. Displays phosphatase activity for serine/threonine residues, and dephosphorylates and activates Pk92B kinase. Has apparently no phosphoglycerate mutase activity. The protein is Serine/threonine-protein phosphatase Pgam5, mitochondrial of Drosophila mojavensis (Fruit fly).